A 207-amino-acid polypeptide reads, in one-letter code: Large ribosomal subunit protein uL4 (207 aa).

Residues 53 to 76 (TVSEVSGTTKKPFKQKGTGNARQG) are disordered.

It belongs to the universal ribosomal protein uL4 family. As to quaternary structure, part of the 50S ribosomal subunit.

One of the primary rRNA binding proteins, this protein initially binds near the 5'-end of the 23S rRNA. It is important during the early stages of 50S assembly. It makes multiple contacts with different domains of the 23S rRNA in the assembled 50S subunit and ribosome. Its function is as follows. Forms part of the polypeptide exit tunnel. This chain is Large ribosomal subunit protein uL4, found in Rickettsia bellii (strain OSU 85-389).